Here is a 116-residue protein sequence, read N- to C-terminus: Class I hydrophobin 1 (116 aa).

The N-terminal stretch at 1 to 19 (MLFKQAILVATTLTDLAVA) is a signal peptide. 4 cysteine pairs are disulfide-bonded: Cys-35–Cys-95, Cys-42–Cys-89, Cys-43–Cys-76, and Cys-96–Cys-109. Asn-44 and Asn-100 each carry an N-linked (GlcNAc...) asparagine glycan.

This sequence belongs to the fungal hydrophobin family. In terms of assembly, self-assembles to form functional amyloid fibrils called rodlets. Self-assembly into fibrillar rodlets occurs spontaneously at hydrophobic:hydrophilic interfaces and the rodlets further associate laterally to form amphipathic monolayers.

The protein resides in the secreted. The protein localises to the cell wall. Its function is as follows. Aerial growth, conidiation, and dispersal of filamentous fungi in the environment rely upon a capability of their secreting small amphipathic proteins called hydrophobins (HPBs) with low sequence identity. Class I can self-assemble into an outermost layer of rodlet bundles on aerial cell surfaces, conferring cellular hydrophobicity that supports fungal growth, development and dispersal; whereas Class II form highly ordered films at water-air interfaces through intermolecular interactions but contribute nothing to the rodlet structure. The chain is Class I hydrophobin 1 from Pleurotus ostreatus (Oyster mushroom).